The chain runs to 360 residues: Protein RecA (360 aa).

65–72 lines the ATP pocket; it reads GPESSGKT.

Belongs to the RecA family.

The protein localises to the cytoplasm. Can catalyze the hydrolysis of ATP in the presence of single-stranded DNA, the ATP-dependent uptake of single-stranded DNA by duplex DNA, and the ATP-dependent hybridization of homologous single-stranded DNAs. It interacts with LexA causing its activation and leading to its autocatalytic cleavage. This is Protein RecA from Tolumonas auensis (strain DSM 9187 / NBRC 110442 / TA 4).